The following is a 118-amino-acid chain: Ribonuclease P protein component (118 aa).

Belongs to the RnpA family. In terms of assembly, consists of a catalytic RNA component (M1 or rnpB) and a protein subunit.

The catalysed reaction is Endonucleolytic cleavage of RNA, removing 5'-extranucleotides from tRNA precursor.. RNaseP catalyzes the removal of the 5'-leader sequence from pre-tRNA to produce the mature 5'-terminus. It can also cleave other RNA substrates such as 4.5S RNA. The protein component plays an auxiliary but essential role in vivo by binding to the 5'-leader sequence and broadening the substrate specificity of the ribozyme. The chain is Ribonuclease P protein component from Desulfatibacillum aliphaticivorans.